A 784-amino-acid chain; its full sequence is Copal-8-ol diphosphate hydratase TPSSA9, chloroplastic (784 aa).

Residue Arg-240 participates in substrate binding. Asp-372 and Asp-374 together coordinate Mg(2+). Residues 372 to 375 (DIDD) carry the DXDD motif motif. Arg-459 contacts substrate.

Belongs to the terpene synthase family.

Its subcellular location is the plastid. The protein localises to the chloroplast. The catalysed reaction is (2E,6E,10E)-geranylgeranyl diphosphate + H2O = 8-hydroxycopalyl diphosphate. The protein operates within secondary metabolite biosynthesis; terpenoid biosynthesis. Involved in the biosynthesis of labdane-type diterpenoid including sclareol, a diterpene-diol that is used as fragrance and flavoring, and has anticancer effects (able to kill leukemic and colon cancer cells by apoptosis). Sclareol can also be used as synthesis precursor of ambergris substitution fragance products such as ambrox. Terpene synthase that produces 8-hydroxycopalyl diphosphate from geranylgeranyl diphosphate (GGPP). This is Copal-8-ol diphosphate hydratase TPSSA9, chloroplastic from Salvia sclarea (Clary sage).